Reading from the N-terminus, the 273-residue chain is Tryptophan synthase alpha chain (273 aa).

Residues E49 and D60 each act as proton acceptor in the active site.

This sequence belongs to the TrpA family. In terms of assembly, tetramer of two alpha and two beta chains.

The enzyme catalyses (1S,2R)-1-C-(indol-3-yl)glycerol 3-phosphate + L-serine = D-glyceraldehyde 3-phosphate + L-tryptophan + H2O. Its pathway is amino-acid biosynthesis; L-tryptophan biosynthesis; L-tryptophan from chorismate: step 5/5. Functionally, the alpha subunit is responsible for the aldol cleavage of indoleglycerol phosphate to indole and glyceraldehyde 3-phosphate. This Thiobacillus denitrificans (strain ATCC 25259 / T1) protein is Tryptophan synthase alpha chain.